A 681-amino-acid polypeptide reads, in one-letter code: Methionine--tRNA ligase (681 aa).

The 'HIGH' region motif lies at 12-22 (PYANGSIHLGH). The Zn(2+) site is built by Cys-143, Cys-146, Cys-156, and Cys-159. Positions 327–331 (KMSKS) match the 'KMSKS' region motif. Lys-330 serves as a coordination point for ATP. The span at 545-557 (FEKSNPEKAKQDP) shows a compositional bias: basic and acidic residues. Residues 545-566 (FEKSNPEKAKQDPSKSNTNEVK) form a disordered region. One can recognise a tRNA-binding domain in the interval 580 to 681 (ELSKVELRVG…RDASPGDLLK (102 aa)).

It belongs to the class-I aminoacyl-tRNA synthetase family. MetG type 1 subfamily. As to quaternary structure, homodimer. It depends on Zn(2+) as a cofactor.

The protein localises to the cytoplasm. It catalyses the reaction tRNA(Met) + L-methionine + ATP = L-methionyl-tRNA(Met) + AMP + diphosphate. Its function is as follows. Is required not only for elongation of protein synthesis but also for the initiation of all mRNA translation through initiator tRNA(fMet) aminoacylation. The polypeptide is Methionine--tRNA ligase (Leptospira biflexa serovar Patoc (strain Patoc 1 / ATCC 23582 / Paris)).